A 177-amino-acid chain; its full sequence is Large ribosomal subunit protein uL6 (177 aa).

This sequence belongs to the universal ribosomal protein uL6 family. Part of the 50S ribosomal subunit.

In terms of biological role, this protein binds to the 23S rRNA, and is important in its secondary structure. It is located near the subunit interface in the base of the L7/L12 stalk, and near the tRNA binding site of the peptidyltransferase center. This is Large ribosomal subunit protein uL6 from Neisseria meningitidis serogroup B (strain ATCC BAA-335 / MC58).